A 264-amino-acid chain; its full sequence is Thymidylate synthase (264 aa).

DUMP is bound at residue R21. H51 serves as a coordination point for (6R)-5,10-methylene-5,6,7,8-tetrahydrofolate. 126–127 serves as a coordination point for dUMP; sequence RR. C146 serves as the catalytic Nucleophile. DUMP-binding positions include 166–169, N177, and 207–209; these read RSGD and HLY. D169 lines the (6R)-5,10-methylene-5,6,7,8-tetrahydrofolate pocket. A (6R)-5,10-methylene-5,6,7,8-tetrahydrofolate-binding site is contributed by A263.

The protein belongs to the thymidylate synthase family. Bacterial-type ThyA subfamily. As to quaternary structure, homodimer.

The protein localises to the cytoplasm. The enzyme catalyses dUMP + (6R)-5,10-methylene-5,6,7,8-tetrahydrofolate = 7,8-dihydrofolate + dTMP. The protein operates within pyrimidine metabolism; dTTP biosynthesis. In terms of biological role, catalyzes the reductive methylation of 2'-deoxyuridine-5'-monophosphate (dUMP) to 2'-deoxythymidine-5'-monophosphate (dTMP) while utilizing 5,10-methylenetetrahydrofolate (mTHF) as the methyl donor and reductant in the reaction, yielding dihydrofolate (DHF) as a by-product. This enzymatic reaction provides an intracellular de novo source of dTMP, an essential precursor for DNA biosynthesis. This Xanthomonas campestris pv. campestris (strain 8004) protein is Thymidylate synthase.